A 1137-amino-acid polypeptide reads, in one-letter code: DNA-directed RNA polymerase III subunit RPC2 (1137 aa).

A C4-type zinc finger spans residues 1084–1099 (DVCRTCGRMAYCSWCH). Zn(2+) is bound by residues C1086, C1089, C1098, and C1101.

The protein belongs to the RNA polymerase beta chain family. Component of the RNA polymerase III (Pol III) complex consisting of 17 subunits.

Its subcellular location is the nucleus. The catalysed reaction is RNA(n) + a ribonucleoside 5'-triphosphate = RNA(n+1) + diphosphate. In terms of biological role, DNA-dependent RNA polymerase catalyzes the transcription of DNA into RNA using the four ribonucleoside triphosphates as substrates. Second largest core component of RNA polymerase III which synthesizes small RNAs, such as 5S rRNA and tRNAs. Proposed to contribute to the polymerase catalytic activity and forms the polymerase active center together with the largest subunit. Pol III is composed of mobile elements and Polr3B is part of the core element with the central large cleft and probably a clamp element that moves to open and close the cleft. The polypeptide is DNA-directed RNA polymerase III subunit RPC2 (Drosophila melanogaster (Fruit fly)).